The following is a 277-amino-acid chain: WRKY transcription factor 68 (277 aa).

The segment at 51–96 is disordered; it reads TPLMHFPTTPNSSSSEAVNGDDEEEEDGEEQQHKTKKRFKFTKMSR. The span at 58-67 shows a compositional bias: polar residues; the sequence is TTPNSSSSEA. A compositionally biased stretch (acidic residues) spans 69 to 79; it reads NGDDEEEEDGE. A compositionally biased stretch (basic residues) spans 84-96; it reads KTKKRFKFTKMSR. Residues 112–177 constitute a DNA-binding region (WRKY); it reads SEVLHLDDGY…YEGQHTHPRP (66 aa). Residues 183-206 form a disordered region; that stretch reads KEGSSPSNGSASRAHIGLPTLPPQ.

Belongs to the WRKY group II-c family.

Its subcellular location is the nucleus. Its function is as follows. Transcription factor. Interacts specifically with the W box (5'-(T)TGAC[CT]-3'), a frequently occurring elicitor-responsive cis-acting element. The polypeptide is WRKY transcription factor 68 (WRKY68) (Arabidopsis thaliana (Mouse-ear cress)).